We begin with the raw amino-acid sequence, 238 residues long: Fatty acid metabolism regulator protein (238 aa).

An HTH gntR-type domain is found at lysine 6–phenylalanine 74. Residues glutamate 34 to glutamine 53 constitute a DNA-binding region (H-T-H motif).

Homodimer.

The protein resides in the cytoplasm. Functionally, multifunctional regulator of fatty acid metabolism. This Shewanella baltica (strain OS185) protein is Fatty acid metabolism regulator protein.